The following is a 493-amino-acid chain: Glutamate--tRNA ligase (493 aa).

Residues 10-20 (PSPTGTPHVGL) carry the 'HIGH' region motif. The short motif at 254–258 (KLSKR) is the 'KMSKS' region element. Lys257 is a binding site for ATP.

The protein belongs to the class-I aminoacyl-tRNA synthetase family. Glutamate--tRNA ligase type 1 subfamily. In terms of assembly, monomer.

It localises to the cytoplasm. The enzyme catalyses tRNA(Glu) + L-glutamate + ATP = L-glutamyl-tRNA(Glu) + AMP + diphosphate. Functionally, catalyzes the attachment of glutamate to tRNA(Glu) in a two-step reaction: glutamate is first activated by ATP to form Glu-AMP and then transferred to the acceptor end of tRNA(Glu). The chain is Glutamate--tRNA ligase from Corynebacterium efficiens (strain DSM 44549 / YS-314 / AJ 12310 / JCM 11189 / NBRC 100395).